The sequence spans 399 residues: Mycinamicin VI 2''-O-methyltransferase (399 aa).

S-adenosyl-L-methionine is bound by residues T173, 202–208 (EIGVGGY), S217, D234, 252–253 (DQ), and D275. Residue D275 participates in Mg(2+) binding. Catalysis depends on H278, which acts as the Proton acceptor. Mg(2+) is bound by residues E303 and D304.

Belongs to the methyltransferase OleY/MycE family. In terms of assembly, homotetramer. Mg(2+) is required as a cofactor.

The enzyme catalyses mycinamicin VI + S-adenosyl-L-methionine = mycinamicin III + S-adenosyl-L-homocysteine + H(+). It functions in the pathway antibiotic biosynthesis; mycinamicin biosynthesis. Functionally, O-methyltransferase that catalyzes the conversion of mycinamicin VI to mycinamicin III in the biosynthesis of mycinamicin, a 16-membered macrolide antibiotic. This is Mycinamicin VI 2''-O-methyltransferase (mycE) from Micromonospora griseorubida.